The sequence spans 119 residues: Ribosome-binding factor A (119 aa).

The protein belongs to the RbfA family. In terms of assembly, monomer. Binds 30S ribosomal subunits, but not 50S ribosomal subunits or 70S ribosomes.

Its subcellular location is the cytoplasm. Functionally, one of several proteins that assist in the late maturation steps of the functional core of the 30S ribosomal subunit. Associates with free 30S ribosomal subunits (but not with 30S subunits that are part of 70S ribosomes or polysomes). Required for efficient processing of 16S rRNA. May interact with the 5'-terminal helix region of 16S rRNA. This is Ribosome-binding factor A from Wolinella succinogenes (strain ATCC 29543 / DSM 1740 / CCUG 13145 / JCM 31913 / LMG 7466 / NCTC 11488 / FDC 602W) (Vibrio succinogenes).